A 298-amino-acid polypeptide reads, in one-letter code: Lactose transport system permease protein LacF (298 aa).

6 helical membrane passes run 17 to 37 (GWLF…YPIL), 77 to 97 (VIFF…LAAM), 112 to 132 (MIFL…KSMF), 151 to 171 (PIGW…AITW), 208 to 228 (AFLT…TSTI), and 269 to 289 (FSYA…LSFL). An ABC transmembrane type-1 domain is found at 73-290 (LQNTVIFFVV…LMVAVLSFLQ (218 aa)).

Belongs to the binding-protein-dependent transport system permease family. MalFG subfamily.

It localises to the cell inner membrane. Part of the binding-protein-dependent transport system for lactose. Probably responsible for the translocation of the substrate across the membrane. This chain is Lactose transport system permease protein LacF (lacF), found in Rhizobium radiobacter (Agrobacterium tumefaciens).